The primary structure comprises 430 residues: Tektin-2 (430 aa).

2 coiled-coil regions span residues 81–162 and 265–379; these read CLTD…FEKL and FRKR…DIAC.

Belongs to the tektin family. Microtubule inner protein component of sperm flagellar doublet microtubules. May interact with CCDC172. Tyrosine phosphorylated. In terms of processing, ubiquitinated, leading to its degradation. Deubiquitinated by USP16, promoting its stability. In terms of tissue distribution, expressed in trachea multiciliated cells.

The protein localises to the cytoplasm. It localises to the cytoskeleton. It is found in the cilium axoneme. The protein resides in the flagellum axoneme. Its subcellular location is the microtubule organizing center. In terms of biological role, microtubule inner protein (MIP) part of the dynein-decorated doublet microtubules (DMTs) in cilia and flagellar axoneme. Plays a key role in the assembly or attachment of the inner dynein arm to microtubules in sperm flagella and tracheal cilia. Forms filamentous polymers in the walls of ciliary and flagellar microtubules. The polypeptide is Tektin-2 (TEKT2) (Bos taurus (Bovine)).